Reading from the N-terminus, the 251-residue chain is DNA repair protein RecO (251 aa).

The protein belongs to the RecO family.

In terms of biological role, involved in DNA repair and RecF pathway recombination. This chain is DNA repair protein RecO, found in Acetivibrio thermocellus (strain ATCC 27405 / DSM 1237 / JCM 9322 / NBRC 103400 / NCIMB 10682 / NRRL B-4536 / VPI 7372) (Clostridium thermocellum).